The chain runs to 442 residues: Elongation factor 1-alpha 1 (442 aa).

The region spanning 5–227 (KEHLNLVVIG…AALDSFKIPK (223 aa)) is the tr-type G domain. Residues 14–21 (GHVDSGKS) form a G1 region. 14–21 (GHVDSGKS) contacts GTP. The segment at 70–74 (GITID) is G2. Positions 91 to 94 (DAPG) are G3. GTP contacts are provided by residues 91–95 (DAPGH) and 153–156 (NKMD). The interval 153–156 (NKMD) is G4. The interval 194 to 196 (SGF) is G5.

Belongs to the TRAFAC class translation factor GTPase superfamily. Classic translation factor GTPase family. EF-Tu/EF-1A subfamily.

Its subcellular location is the cytoplasm. In terms of biological role, this protein promotes the GTP-dependent binding of aminoacyl-tRNA to the A-site of ribosomes during protein biosynthesis. The sequence is that of Elongation factor 1-alpha 1 (EFA1) from Euplotes crassus.